A 124-amino-acid polypeptide reads, in one-letter code: Chorion class high-cysteine HCA protein 12 (124 aa).

The N-terminal stretch at 1-21 (MFTFALLLLCVQGCLIQNVYG) is a signal peptide. The tract at residues 22 to 35 (QCCGCGCGGGCGCG) is left arm. The segment at 36-83 (CYGGEGDGNVNVCGELPVCGETLVCGRVPICGGVCFKGPACASGCVSI) is central domain. Residues 84 to 124 (CGRCCGCGCGGCGGCGCGCGGCGCGCGGCGGCGCGRRCCCC) form a right arm (Gly- and Cys-rich tandem repeats) region.

The protein belongs to the chorion protein family.

Functionally, this protein is one of many from the eggshell of the silk moth. The chain is Chorion class high-cysteine HCA protein 12 from Bombyx mori (Silk moth).